Consider the following 314-residue polypeptide: 2,3-dihydroxyphenylpropionate/2,3-dihydroxicinnamic acid 1,2-dioxygenase (314 aa).

H115 acts as the Proton donor in catalysis. Catalysis depends on H179, which acts as the Proton acceptor.

Belongs to the LigB/MhpB extradiol dioxygenase family. As to quaternary structure, homotetramer. The cofactor is Fe(2+).

It catalyses the reaction 3-(2,3-dihydroxyphenyl)propanoate + O2 = (2Z,4E)-2-hydroxy-6-oxonona-2,4-dienedioate + H(+). The catalysed reaction is (2E)-3-(2,3-dihydroxyphenyl)prop-2-enoate + O2 = (2Z,4E,7E)-2-hydroxy-6-oxonona-2,4,7-trienedioate + H(+). It functions in the pathway aromatic compound metabolism; 3-phenylpropanoate degradation. In terms of biological role, catalyzes the non-heme iron(II)-dependent oxidative cleavage of 2,3-dihydroxyphenylpropionic acid and 2,3-dihydroxicinnamic acid into 2-hydroxy-6-ketononadienedioate and 2-hydroxy-6-ketononatrienedioate, respectively. The polypeptide is 2,3-dihydroxyphenylpropionate/2,3-dihydroxicinnamic acid 1,2-dioxygenase (Escherichia coli (strain 55989 / EAEC)).